We begin with the raw amino-acid sequence, 187 residues long: Protein GrpE (187 aa).

A disordered region spans residues 1 to 22 (MADEQNLDAQAQDQAAEAGAGD). Residues 7–22 (LDAQAQDQAAEAGAGD) are compositionally biased toward low complexity.

Belongs to the GrpE family. Homodimer.

The protein localises to the cytoplasm. Participates actively in the response to hyperosmotic and heat shock by preventing the aggregation of stress-denatured proteins, in association with DnaK and GrpE. It is the nucleotide exchange factor for DnaK and may function as a thermosensor. Unfolded proteins bind initially to DnaJ; upon interaction with the DnaJ-bound protein, DnaK hydrolyzes its bound ATP, resulting in the formation of a stable complex. GrpE releases ADP from DnaK; ATP binding to DnaK triggers the release of the substrate protein, thus completing the reaction cycle. Several rounds of ATP-dependent interactions between DnaJ, DnaK and GrpE are required for fully efficient folding. In Pseudomonas syringae pv. tomato (strain ATCC BAA-871 / DC3000), this protein is Protein GrpE.